We begin with the raw amino-acid sequence, 159 residues long: Nanos homolog 3 (159 aa).

Residues 42–87 are disordered; sequence QEMQSDADSDEQAAALLESPSGPIRSRDSPEQNTSPGGGKPKSSPA. The Nanos-type zinc finger occupies 91-145; it reads FCSFCKHNGETEAVYTSHYLKNRDGDVMCPYLRQYKCPLCGATGAKAHTKRFCPM. 8 residues coordinate Zn(2+): Cys92, Cys95, His108, Cys119, Cys127, Cys130, His138, and Cys143. 2 short sequence motifs (C2HC) span residues 92–119 and 127–143; these read CSFCKHNGETEAVYTSHYLKNRDGDVMC and CPLCGATGAKAHTKRFC. The tract at residues 92 to 159 is interaction with mylpfa; that stretch reads CSFCKHNGET…YCSVYAKSTW (68 aa).

This sequence belongs to the nanos family. In terms of assembly, interacts (via C-terminus) with myosin mylpfa/mylz2; the interaction negatively regulates mylpfa phosphorylation. In the embryo, displays early ubiquitous expression before being restricted to primordial germ cells in a 3'-UTR-dependent manner. Expressed in early stage germ cells in larval and adult ovaries.

Its subcellular location is the cytoplasm. It localises to the perinuclear region. Functionally, RNA-binding protein which binds to RNA with no sequence specificity. Probably represses translation of specific mRNAs. Essential for the development of primordial germ cells (PGCs) by ensuring their proper migration and survival but is not required for PGC specification. Also required to maintain oocyte production in the adult ovary. Negatively regulates phosphorylation of myosin mylpfa/mylz2. The polypeptide is Nanos homolog 3 (Danio rerio (Zebrafish)).